The chain runs to 403 residues: Imidazolonepropionase (403 aa).

Residues His-74 and His-76 each contribute to the Fe(3+) site. Residues His-74 and His-76 each coordinate Zn(2+). Positions 83, 146, and 179 each coordinate 4-imidazolone-5-propanoate. N-formimidoyl-L-glutamate is bound at residue Tyr-146. His-242 contributes to the Fe(3+) binding site. His-242 contacts Zn(2+). Gln-245 contributes to the 4-imidazolone-5-propanoate binding site. Asp-317 provides a ligand contact to Fe(3+). Asp-317 is a binding site for Zn(2+). Residues Asn-319 and Gly-321 each coordinate N-formimidoyl-L-glutamate. Thr-322 contacts 4-imidazolone-5-propanoate.

This sequence belongs to the metallo-dependent hydrolases superfamily. HutI family. Zn(2+) serves as cofactor. The cofactor is Fe(3+).

It is found in the cytoplasm. It catalyses the reaction 4-imidazolone-5-propanoate + H2O = N-formimidoyl-L-glutamate. It functions in the pathway amino-acid degradation; L-histidine degradation into L-glutamate; N-formimidoyl-L-glutamate from L-histidine: step 3/3. Catalyzes the hydrolytic cleavage of the carbon-nitrogen bond in imidazolone-5-propanoate to yield N-formimidoyl-L-glutamate. It is the third step in the universal histidine degradation pathway. The chain is Imidazolonepropionase from Sphingopyxis alaskensis (strain DSM 13593 / LMG 18877 / RB2256) (Sphingomonas alaskensis).